The chain runs to 456 residues: Bifunctional protein GlmU (456 aa).

The tract at residues 1–230 (MDKRFAVVLA…FQETLGVNDR (230 aa)) is pyrophosphorylase. UDP-N-acetyl-alpha-D-glucosamine contacts are provided by residues 9-12 (LAAG), Lys23, Gln73, and 78-79 (GT). A Mg(2+)-binding site is contributed by Asp103. Gly140, Glu155, Asn170, and Asn228 together coordinate UDP-N-acetyl-alpha-D-glucosamine. Asn228 contributes to the Mg(2+) binding site. Residues 231–251 (VALSQAEIYMKQRINKRHMQN) form a linker region. The tract at residues 252–456 (GVSLIDPDNT…EDYAENIHKK (205 aa)) is N-acetyltransferase. Residues Arg333 and Lys351 each contribute to the UDP-N-acetyl-alpha-D-glucosamine site. Catalysis depends on His363, which acts as the Proton acceptor. UDP-N-acetyl-alpha-D-glucosamine is bound by residues Tyr366 and Asn377. Residues 386–387 (NY), Ala423, and Arg440 contribute to the acetyl-CoA site.

It in the N-terminal section; belongs to the N-acetylglucosamine-1-phosphate uridyltransferase family. This sequence in the C-terminal section; belongs to the transferase hexapeptide repeat family. In terms of assembly, homotrimer. The cofactor is Mg(2+).

The protein localises to the cytoplasm. It catalyses the reaction alpha-D-glucosamine 1-phosphate + acetyl-CoA = N-acetyl-alpha-D-glucosamine 1-phosphate + CoA + H(+). It carries out the reaction N-acetyl-alpha-D-glucosamine 1-phosphate + UTP + H(+) = UDP-N-acetyl-alpha-D-glucosamine + diphosphate. Its pathway is nucleotide-sugar biosynthesis; UDP-N-acetyl-alpha-D-glucosamine biosynthesis; N-acetyl-alpha-D-glucosamine 1-phosphate from alpha-D-glucosamine 6-phosphate (route II): step 2/2. It participates in nucleotide-sugar biosynthesis; UDP-N-acetyl-alpha-D-glucosamine biosynthesis; UDP-N-acetyl-alpha-D-glucosamine from N-acetyl-alpha-D-glucosamine 1-phosphate: step 1/1. It functions in the pathway bacterial outer membrane biogenesis; LPS lipid A biosynthesis. Its function is as follows. Catalyzes the last two sequential reactions in the de novo biosynthetic pathway for UDP-N-acetylglucosamine (UDP-GlcNAc). The C-terminal domain catalyzes the transfer of acetyl group from acetyl coenzyme A to glucosamine-1-phosphate (GlcN-1-P) to produce N-acetylglucosamine-1-phosphate (GlcNAc-1-P), which is converted into UDP-GlcNAc by the transfer of uridine 5-monophosphate (from uridine 5-triphosphate), a reaction catalyzed by the N-terminal domain. The polypeptide is Bifunctional protein GlmU (Bacillus licheniformis (strain ATCC 14580 / DSM 13 / JCM 2505 / CCUG 7422 / NBRC 12200 / NCIMB 9375 / NCTC 10341 / NRRL NRS-1264 / Gibson 46)).